Reading from the N-terminus, the 2403-residue chain is Highly reducing polyketide synthase fogA (2403 aa).

The Ketosynthase family 3 (KS3) domain maps to 3–428 (DDPPCIVGMA…GANAHVILES (426 aa)). Catalysis depends on for beta-ketoacyl synthase activity residues C176, H311, and H350. The interval 538-858 (VFTGQGAQYA…PYAPSLVRKE (321 aa)) is malonyl-CoA:ACP transacylase (MAT) domain. The For malonyltransferase activity role is filled by S632. An N-terminal hotdog fold region spans residues 929 to 1068 (HELLGTFALT…GSIRVVEPLT (140 aa)). The tract at residues 929–1238 (HELLGTFALT…DARMSLYTGK (310 aa)) is dehydratase (DH) domain. Positions 929–1241 (HELLGTFALT…MSLYTGKSSA (313 aa)) constitute a PKS/mFAS DH domain. The Proton acceptor; for dehydratase activity role is filled by H961. The C-terminal hotdog fold stretch occupies residues 1084-1241 (SFEASPTNRW…MSLYTGKSSA (158 aa)). Residue D1152 is the Proton donor; for dehydratase activity of the active site. The interval 1663 to 1981 (GATDSMFFQQ…QQDRIGKIVI (319 aa)) is enoyl reductase (ER) domain. Positions 2006-2185 (VYLLIGCLGG…AVAVGLGMIS (180 aa)) are ketoreductase (KR) domain. The segment at 2280–2300 (AQNSTSSSGSNSNTPTTAAPW) is disordered. Residues 2282–2296 (NSTSSSGSNSNTPTT) are compositionally biased toward low complexity. Residues 2320–2398 (SLNAAILRLI…GLAVVVEGKL (79 aa)) form the Carrier domain. An O-(pantetheine 4'-phosphoryl)serine modification is found at S2357.

The cofactor is pantetheine 4'-phosphate.

It participates in secondary metabolite biosynthesis. In terms of biological role, highly reducing polyketide synthase; part of the gene cluster that mediates the biosynthesis of flavoglaucin and congeners (including aspergin, dihydroauroglaucin and auroglaucin), prenylated salicylaldehyde derivatives carrying a saturated or an unsaturated C-7 side chain. FogA releases the carboxylic acid (8E,10E,12E)-3,5,7-trihydroxytetradeca-8,10,12-trienoic acid as its product, as well as derivatives with one and two double bonds. FogA is indeed able to reduce the initial triketide, thus being at least partially responsible for the differently saturated heptyl side chains of flavoglaucin congeners. The oxidoreductases fogB, fogC and fogD modify the nascent polyketide in fogA-bound form and, together, fogA, fogB, fogC and fogD are necessary for the formation of the aromatic core and the cyclized PKS products are released as salicyl alcohols. In particular, fogB is responsible for oxidation of a hydroxyl group or reduction of remaining double bond(s) at the C-7 residue whereas fogD is probably involved in the reductive release of the modified PKS products. The cytochrome P450 monooxygenase fogE is then responsible for the hydroxylation at C-3 of the benzene ring. The fogE products are substrates of the prenyltransferase fogH and the prenylated benzyl alcohols are subsequently oxidized by the fogF to produce the final aryl aldehydes flavoglaucin and congeners. The short-chain dehydrogenase fogG does not seem to be involved in the biosynthesis of the prenylated salicylaldehyde derivatives. This is Highly reducing polyketide synthase fogA from Aspergillus ruber (strain CBS 135680).